The following is a 211-amino-acid chain: MISYYFQGLALGAAMILPLGPQNAFVMNQGIRRQYHLMIALLCALSDLVLISAGIFGGSALLMQSPWLLALVTWGGVAFLLWYGFGALKTAMSSNLELASAEVMKQGRWKIIATMLAVTWLNPHVYLDTFVVLGSLGGQLAMEPKRWFALGTISASFLWFFGLALLAAWLAPRLRTAKAQRIINILVGVVMWLIAFQLAREGVAHMHALFN.

The next 6 helical transmembrane spans lie at 1–21 (MISYYFQGLALGAAMILPLGP), 37–57 (LMIALLCALSDLVLISAGIFG), 68–88 (LLALVTWGGVAFLLWYGFGAL), 111–131 (IIATMLAVTWLNPHVYLDTFV), 147–167 (WFALGTISASFLWFFGLALLA), and 179–199 (AQRIINILVGVVMWLIAFQLA).

Belongs to the LysE/ArgO transporter (TC 2.A.75) family.

Its subcellular location is the cell inner membrane. The catalysed reaction is L-arginine(in) = L-arginine(out). In terms of biological role, involved in the export of arginine. Important to control the intracellular level of arginine and the correct balance between arginine and lysine. The chain is Arginine exporter protein ArgO from Salmonella schwarzengrund (strain CVM19633).